The chain runs to 280 residues: Putative pyruvate, phosphate dikinase regulatory protein (280 aa).

Residue 158–165 (GVSRTSKT) coordinates ADP.

Belongs to the pyruvate, phosphate/water dikinase regulatory protein family. PDRP subfamily.

It carries out the reaction N(tele)-phospho-L-histidyl/L-threonyl-[pyruvate, phosphate dikinase] + ADP = N(tele)-phospho-L-histidyl/O-phospho-L-threonyl-[pyruvate, phosphate dikinase] + AMP + H(+). The catalysed reaction is N(tele)-phospho-L-histidyl/O-phospho-L-threonyl-[pyruvate, phosphate dikinase] + phosphate + H(+) = N(tele)-phospho-L-histidyl/L-threonyl-[pyruvate, phosphate dikinase] + diphosphate. Functionally, bifunctional serine/threonine kinase and phosphorylase involved in the regulation of the pyruvate, phosphate dikinase (PPDK) by catalyzing its phosphorylation/dephosphorylation. The protein is Putative pyruvate, phosphate dikinase regulatory protein of Lactobacillus johnsonii (strain CNCM I-12250 / La1 / NCC 533).